The following is a 515-amino-acid chain: WUSCHEL-related homeobox 12 (515 aa).

Composition is skewed to polar residues over residues Gln23–Gly32 and Thr44–Ser57. 3 disordered regions span residues Gln23 to Arg76, Asn130 to Thr156, and Leu176 to Lys195. Basic and acidic residues predominate over residues Glu62–Pro71. Residues Glu68–Leu132 constitute a DNA-binding region (homeobox; WUS-type). Residues Asn130–Arg143 show a composition bias toward basic residues. 2 stretches are compositionally biased toward low complexity: residues Ala144–Thr156 and Leu177–Lys195.

It belongs to the WUS homeobox family.

It is found in the nucleus. Its function is as follows. Transcription factor which may be involved in developmental processes. This Oryza sativa subsp. japonica (Rice) protein is WUSCHEL-related homeobox 12 (WOX12).